A 264-amino-acid chain; its full sequence is Glutamate racemase (264 aa).

Substrate is bound by residues 10 to 11 (DS) and 42 to 43 (YG). The active-site Proton donor/acceptor is Cys-73. 74 to 75 (NT) is a binding site for substrate. Cys-183 (proton donor/acceptor) is an active-site residue. Position 184–185 (184–185 (TH)) interacts with substrate.

Belongs to the aspartate/glutamate racemases family.

It catalyses the reaction L-glutamate = D-glutamate. It functions in the pathway cell wall biogenesis; peptidoglycan biosynthesis. Provides the (R)-glutamate required for cell wall biosynthesis. The sequence is that of Glutamate racemase from Streptococcus pneumoniae serotype 19F (strain G54).